Consider the following 122-residue polypeptide: Large ribosomal subunit protein uL14 (122 aa).

This sequence belongs to the universal ribosomal protein uL14 family. In terms of assembly, part of the 50S ribosomal subunit. Forms a cluster with proteins L3 and L19. In the 70S ribosome, L14 and L19 interact and together make contacts with the 16S rRNA in bridges B5 and B8.

Its function is as follows. Binds to 23S rRNA. Forms part of two intersubunit bridges in the 70S ribosome. The sequence is that of Large ribosomal subunit protein uL14 from Aliarcobacter butzleri (strain RM4018) (Arcobacter butzleri).